We begin with the raw amino-acid sequence, 342 residues long: Antihemorrhagic factor cHLP-B (342 aa).

An N-terminal signal peptide occupies residues 1 to 19 (MNSLVALVLLGQMIGSTLS). Cystatin fetuin-A-type domains are found at residues 20–129 (HHLQ…AKCH) and 140–253 (RNCP…SDCV). Cystine bridges form between C28-C333, C85-C96, C110-C128, C142-C145, C204-C216, and C229-C252. A glycan (N-linked (GlcNAc...) asparagine) is linked at N95. The N-linked (GlcNAc...) asparagine glycan is linked to N203. 2 N-linked (GlcNAc...) asparagine glycosylation sites follow: N281 and N292.

The protein belongs to the fetuin family. As to quaternary structure, homodimer. In terms of tissue distribution, expressed by the liver.

Its subcellular location is the secreted. Its function is as follows. Potent inhibitor of hemorrhagic activity but also proteolytic activities. Inhibition occurs by formation of a non-covalent complex between this protein and the proteinases at their metalloproteinase domains. The protein is Antihemorrhagic factor cHLP-B of Gloydius brevicauda (Korean slamosa snake).